Reading from the N-terminus, the 525-residue chain is GMP synthase [glutamine-hydrolyzing] (525 aa).

Residues 9–207 (KILILDFGSQ…IVDICGCDTL (199 aa)) form the Glutamine amidotransferase type-1 domain. The active-site Nucleophile is cysteine 86. Residues histidine 181 and glutamate 183 contribute to the active site. One can recognise a GMPS ATP-PPase domain in the interval 208 to 400 (WTPANIAQDA…LGLPYDMVYR (193 aa)). ATP is bound at residue 235–241 (SGGVDSS).

As to quaternary structure, homodimer.

It carries out the reaction XMP + L-glutamine + ATP + H2O = GMP + L-glutamate + AMP + diphosphate + 2 H(+). It functions in the pathway purine metabolism; GMP biosynthesis; GMP from XMP (L-Gln route): step 1/1. Catalyzes the synthesis of GMP from XMP. The polypeptide is GMP synthase [glutamine-hydrolyzing] (Marinomonas sp. (strain MWYL1)).